A 430-amino-acid polypeptide reads, in one-letter code: Tol-Pal system protein TolB (430 aa).

Residues 1-21 (MKQALRVAFGFLILWASVLHA) form the signal peptide.

The protein belongs to the TolB family. In terms of assembly, the Tol-Pal system is composed of five core proteins: the inner membrane proteins TolA, TolQ and TolR, the periplasmic protein TolB and the outer membrane protein Pal. They form a network linking the inner and outer membranes and the peptidoglycan layer.

Its subcellular location is the periplasm. Its function is as follows. Part of the Tol-Pal system, which plays a role in outer membrane invagination during cell division and is important for maintaining outer membrane integrity. TolB occupies a key intermediary position in the Tol-Pal system because it communicates directly with both membrane-embedded components, Pal in the outer membrane and TolA in the inner membrane. In Shigella flexneri, this protein is Tol-Pal system protein TolB.